An 85-amino-acid chain; its full sequence is MASPVSPFAWIALIPIYFYRWFISPLIGPRCRFTPTCSLYAIEALKAHGFVKGCWLSGKRLLKCHPLNEGGFDPVPPVQKQDRDK.

Belongs to the UPF0161 family.

It localises to the cell inner membrane. Could be involved in insertion of integral membrane proteins into the membrane. The sequence is that of Putative membrane protein insertion efficiency factor from Vibrio atlanticus (strain LGP32) (Vibrio splendidus (strain Mel32)).